Reading from the N-terminus, the 434-residue chain is D-amino acid dehydrogenase (434 aa).

Position 3–17 (3–17 (VLVLGSGVIGTASAY)) interacts with FAD.

This sequence belongs to the DadA oxidoreductase family. FAD is required as a cofactor.

It carries out the reaction a D-alpha-amino acid + A + H2O = a 2-oxocarboxylate + AH2 + NH4(+). The protein operates within amino-acid degradation; D-alanine degradation; NH(3) and pyruvate from D-alanine: step 1/1. In terms of biological role, oxidative deamination of D-amino acids. This is D-amino acid dehydrogenase from Pseudomonas putida (strain ATCC 700007 / DSM 6899 / JCM 31910 / BCRC 17059 / LMG 24140 / F1).